The sequence spans 390 residues: 3,5-dihydroxybiphenyl synthase (390 aa).

Cysteine 161 is a catalytic residue.

The protein belongs to the thiolase-like superfamily. Chalcone/stilbene synthases family. In terms of assembly, homodimer.

It catalyses the reaction benzoyl-CoA + 3 malonyl-CoA + 3 H(+) = biphenyl-3,5-diol + 4 CO2 + 4 CoA. Functionally, type III polyketide synthase involved in the biosynthesis of the phytoalexins bisphenyls and dibenzofurans. Can also use salicoyl-CoA and malonyl-CoA to produce a diketide intermediate yielding 4-hydroxycoumarin after cyclization and enolization. Can also use m-hydroxybenzoyl-CoA as substrate, producing m-hydroxybenzoyl diacetic acid lactone as a derailment product. No activity with p-hydroxybenzoyl-CoA, CoA-linked cinnamic acids or acetyl-CoA. The protein is 3,5-dihydroxybiphenyl synthase (BIS1) of Sorbus aucuparia (European mountain ash).